The primary structure comprises 323 residues: Cytochrome c biogenesis protein CcsA (323 aa).

8 consecutive transmembrane segments (helical) span residues 18-38 (VSVVITLHLITLLVNEIVGLY), 43-63 (KGMLVTFFCITGLLVTRWVYW), 71-91 (LYESLIFLSWSFYLIHMIPSF), 99-119 (LNVITAPSAIFTQGFATSGLL), 146-166 (LGYAALLGGSLLSVTLLIIIF), 227-247 (VISLGFIFLTIGILSGAVWAN), 256-276 (WDPKETWAFITWTIFAIYLHI), and 288-308 (AIVAFIGFLIIWICYFGVNLL).

It belongs to the CcmF/CycK/Ccl1/NrfE/CcsA family. In terms of assembly, may interact with Ccs1.

Its subcellular location is the plastid. The protein resides in the chloroplast thylakoid membrane. Its function is as follows. Required during biogenesis of c-type cytochromes (cytochrome c6 and cytochrome f) at the step of heme attachment. This chain is Cytochrome c biogenesis protein CcsA, found in Spinacia oleracea (Spinach).